We begin with the raw amino-acid sequence, 221 residues long: uncharacterized protein (221 aa).

Its subcellular location is the mitochondrion. This is an uncharacterized protein from Paramecium tetraurelia.